The chain runs to 233 residues: B-cell lymphoma/leukemia 10 (233 aa).

At Met1 the chain carries N-acetylmethionine. The 89-residue stretch at 13–101 (LTEVKKDALE…QNFLIQKITD (89 aa)) folds into the CARD domain. Glycyl lysine isopeptide (Lys-Gly) (interchain with G-Cter in ubiquitin) cross-links involve residues Lys17, Lys31, and Lys63. A compositionally biased stretch (polar residues) spans 130–141 (TNNLSRSNSDES). Disordered stretches follow at residues 130–149 (TNNL…KQRP) and 186–233 (SFSS…LSRQ). Ser138 carries the post-translational modification Phosphoserine. A compositionally biased stretch (pro residues) spans 195–205 (PGDPGAPPLPP).

As to quaternary structure, homomultimer; homooligomerized following recruitment by CARD domain-containing proteins that form a nucleating helical template that recruits BCL10 via CARD-CARD interaction. Self-associates by CARD-CARD interaction and interacts with other CARD-proteins such as CARD9, CARD10, CARD11 and CARD14. Forms a complex with CARD14 and MALT1; resulting in the formation of a CBM (CARD14-BCL10-MALT1) complex. Forms a complex with CARD11 and MALT1; resulting in the formation of a CBM (CARD11-BCL10-MALT1) complex. Forms a complex with CARD9 and MALT1; resulting in the formation of a CBM (CARD9-BCL10-MALT1) complex. Found in a membrane raft complex, at least composed of BCL10, CARD11, DPP4 and IKBKB. Binds caspase-9 with its C-terminal domain. Interacts with TRAF2 and BIRC2/c-IAP2. Interacts with PELI2 and SOCS3; these interactions may be mutually exclusive. Phosphorylated. Phosphorylation results in dissociation from TRAF2 and binding to BIRC2/c-IAP2. Phosphorylated by IKBKB/IKKB. In terms of processing, ubiquitinated via both 'Lys-63'-linked and linear ('Met-1'-linked) polyubiquitin chains in response to T-cell receptor (TCR) activation. Ubiquitination is recognized by IKBKG/NEMO, the regulatory subunit of I-kappa-B kinase (IKK), and is required for TCR-induced NF-kappa-B activation. Linear ubiquitination at Lys-17, Lys-31 and Lys-63 is mediated by RNF31/HOIP; linear ubiquitination is recognized with much higher affinity than 'Lys-63'-linked ubiquitin by IKBKG/NEMO. CARD11 is required for linear ubiquitination by HOIP by promoting the targeting of BCL10 to RNF31/HOIP. Post-translationally, proteolytically cleaved by MALT1; required for T-cell activation.

The protein resides in the cytoplasm. It is found in the perinuclear region. It localises to the membrane raft. In terms of biological role, plays a key role in both adaptive and innate immune signaling by bridging CARD domain-containing proteins to immune activation. Acts by channeling adaptive and innate immune signaling downstream of CARD domain-containing proteins CARD9, CARD11 and CARD14 to activate NF-kappa-B and MAP kinase p38 (MAPK11, MAPK12, MAPK13 and/or MAPK14) pathways which stimulate expression of genes encoding pro-inflammatory cytokines and chemokines. Recruited by activated CARD domain-containing proteins: homooligomerized CARD domain-containing proteins form a nucleating helical template that recruits BCL10 via CARD-CARD interaction, thereby promoting polymerization of BCL10, subsequent recruitment of MALT1 and formation of a CBM complex. This leads to activation of NF-kappa-B and MAP kinase p38 (MAPK11, MAPK12, MAPK13 and/or MAPK14) pathways which stimulate expression of genes encoding pro-inflammatory cytokines and chemokines. Activated by CARD9 downstream of C-type lectin receptors; CARD9-mediated signals are essential for antifungal immunity. Activated by CARD11 downstream of T-cell receptor (TCR) and B-cell receptor (BCR). Promotes apoptosis, pro-caspase-9 maturation and activation of NF-kappa-B via NIK and IKK. This Rattus norvegicus (Rat) protein is B-cell lymphoma/leukemia 10.